The chain runs to 126 residues: UPF0212 protein TON_0350 (126 aa).

It belongs to the UPF0212 family.

The sequence is that of UPF0212 protein TON_0350 from Thermococcus onnurineus (strain NA1).